Reading from the N-terminus, the 215-residue chain is Fibrillarin-like rRNA/tRNA 2'-O-methyltransferase (215 aa).

The disordered stretch occupies residues 1 to 29 (MKASSSLPDGVQRRQFDNRSRLTTHGTTV). The span at 11 to 20 (VQRRQFDNRS) shows a compositional bias: basic and acidic residues. S-adenosyl-L-methionine contacts are provided by residues 76–77 (TT), 92–93 (EF), 117–118 (DA), and 138–141 (DVAT).

It belongs to the methyltransferase superfamily. Fibrillarin family. In terms of assembly, interacts with nop5. Component of box C/D small ribonucleoprotein (sRNP) particles that contain rpl7ae, FlpA and nop5, plus a guide RNA.

In terms of biological role, involved in pre-rRNA and tRNA processing. Utilizes the methyl donor S-adenosyl-L-methionine to catalyze the site-specific 2'-hydroxyl methylation of ribose moieties in rRNA and tRNA. Site specificity is provided by a guide RNA that base pairs with the substrate. Methylation occurs at a characteristic distance from the sequence involved in base pairing with the guide RNA. In Haloquadratum walsbyi (strain DSM 16790 / HBSQ001), this protein is Fibrillarin-like rRNA/tRNA 2'-O-methyltransferase.